A 426-amino-acid polypeptide reads, in one-letter code: Formyl-CoA:oxalate CoA-transferase (426 aa).

CoA contacts are provided by residues 17–18 (QS), Arg38, 72–75 (LDTK), 96–98 (NFG), Arg104, and 136–139 (KVYE). Residue Asp168 is the Nucleophile of the active site. 247–249 (GGQ) is a substrate binding site.

This sequence belongs to the CoA-transferase III family. Frc subfamily. Homodimer.

The catalysed reaction is formyl-CoA + oxalate = oxalyl-CoA + formate. The protein operates within metabolic intermediate degradation; oxalate degradation; CO(2) and formate from oxalate: step 1/2. Involved in the catabolism of oxalate and in the adapatation to low pH via the induction of the oxalate-dependent acid tolerance response (ATR). Catalyzes the transfer of the CoA moiety from formyl-CoA to oxalate. The protein is Formyl-CoA:oxalate CoA-transferase of Rhodopseudomonas palustris (strain BisB18).